We begin with the raw amino-acid sequence, 760 residues long: MASFLKPVNSQGLWLSLLLAITYLFLLPSAGQSLDPSGIGLAAGCSQSQGGISSFAALPRPCNDSVCTLPDLGWSCQRTAQDTANQQQSPFNHTGHFLTTSGWTWPNWTCSPSQCQLLIHLPTWQIVKQDFLLLLKEWDLLTMCQRCSDLLTKTPGFILRFAGETLILVANLIEFVLVSWSLWLCSVLVYVAQAVPGKFLLYMAAFCTTFWAWPRETASSLIRIVTTPLTLIGFLNKTGIGLISHCLALTWNMFMTWSLLPWVTLMKMMKILITSSRVLTRSGRPKRTSSKSLKHKLKISRAIQKKQGKKTPVEERTIPGVQIKKLREDPPKGVILRCTDQFGDHVGYASAVKLEKGQTGIVLPIHVWTDTVYINGPNGKLKMADFTALYEVTNHDSLIMTSAMAGWGSILGVRPRPLTTIDAVKLKNYSLFTERDGKWYVQAAKCIAPAEGMFRVVSDTRPGDSGLPLFDMKMNVVAVHRGTWPSERFPENRAFAILPVPDLTSSSSPKFTGCETYSEAETAYEMADNFSDGEEILIRTKGQSYRTFIGSNKVALLSIRKLEEELSRGPIGLWADDTEDDESAPRRSGNGLFRSTPEKQSQAKTPSPKVEESAAPPPAPRAEKVRHVRRSEMTPEQKRADNLRRRKAKAAKKTPSTPPKKSKDKAPTLSQVAELVEKAVRAALTVQPRRSRASSKISIGGRNPGRKPQVSIQLDPVPSQSTSVPPKDSQAGESAWLGPRRSYRPVQKSTVGQKQEPRRN.

Residues Met-1–Ser-33 form the signal peptide. 4 consecutive transmembrane segments (helical) span residues Leu-172–Ala-192, Ala-194–Pro-214, Ala-218–Leu-235, and Ile-240–Leu-260. The Peptidase S39 domain occupies Ile-318–Glu-515. Residues His-366, Asp-396, and Ser-465 each act as for protease activity in the active site. Disordered stretches follow at residues Gly-572–Val-672 and Leu-684–Asn-760. Over residues Arg-621–Leu-643 the composition is skewed to basic and acidic residues.

The protein belongs to the peptidase S39B family. In terms of processing, specific enzymatic cleavages in vivo yield mature proteins. The protease probably cleaves itself and releases the VPg protein.

Its subcellular location is the membrane. Functionally, precursor from which the VPg molecule is probably released at the onset of the RNA synthesis. Essential for virus replication. This chain is Protein P1, found in Pea enation mosaic virus-1 (strain WSG) (PEMV-1).